Reading from the N-terminus, the 1288-residue chain is Mitogen-activated protein kinase kinase kinase 6 (1288 aa).

One can recognise a Protein kinase domain in the interval 648-906 (TGERLVLGKG…AQTLLGDPFL (259 aa)). Residues 654–662 (LGKGTYGVV) and K677 contribute to the ATP site. The active-site Proton acceptor is D771. T806 is modified (phosphothreonine). The interval 899 to 997 (TLLGDPFLQP…SSGLSLLHQE (99 aa)) is disordered. Residues 914-952 (SPSSPRHAPRPSDAPSASPTPSANSTTQSQTFPCPQAPS) show a composition bias toward low complexity. 2 positions are modified to phosphoserine: S964 and S984. The segment covering 980-989 (EEPASPEESS) has biased composition (low complexity). Positions 1004 to 1029 (LAAVLEQELPALAENLHQEQKQEQGA) form a coiled coil. Basic and acidic residues predominate over residues 1123–1134 (VEKEAVSPRSEE). Residues 1123 to 1157 (VEKEAVSPRSEELSNEGDSQQSPGQQSPLPVEPEQ) are disordered. A phosphoserine mark is found at S1129 and S1149. A compositionally biased stretch (low complexity) spans 1141–1151 (SQQSPGQQSPL). Residues 1166-1205 (LSLLRAETDRLREILAGKEREYQALVQRALQRLNEEARTY) are a coiled coil.

Belongs to the protein kinase superfamily. STE Ser/Thr protein kinase family. MAP kinase kinase kinase subfamily. In terms of assembly, binds both upstream activators and downstream substrates in multimolecular complexes. Mg(2+) serves as cofactor.

The enzyme catalyses L-seryl-[protein] + ATP = O-phospho-L-seryl-[protein] + ADP + H(+). It carries out the reaction L-threonyl-[protein] + ATP = O-phospho-L-threonyl-[protein] + ADP + H(+). Activated by phosphorylation on Thr-806. Catalytically active only when complexed with MAP3K5, with MAP3K5 supporting the stability and the active configuration of MAP3K6 and MAP3K6 activating MAP3K5 by direct phosphorylation. Its function is as follows. Component of a protein kinase signal transduction cascade. Activates the JNK, but not ERK or p38 kinase pathways. This is Mitogen-activated protein kinase kinase kinase 6 (MAP3K6) from Homo sapiens (Human).